A 333-amino-acid polypeptide reads, in one-letter code: Probable G-protein coupled receptor 33 (333 aa).

At 1–30 (MDLINSTDYLINASTLVRNSTQFLAPASKM) the chain is on the extracellular side. Residues asparagine 5, asparagine 12, and asparagine 19 are each glycosylated (N-linked (GlcNAc...) asparagine). A helical membrane pass occupies residues 31–53 (IIALSLYISSIIGTITNGLYLWV). Residues 54–64 (LRFKMKQTVNT) lie on the Cytoplasmic side of the membrane. A helical transmembrane segment spans residues 65–86 (LLFFHLILSYFISTMILPFMAT). Over 87-103 (SQLQDNHWNFGTALCKV) the chain is Extracellular. A disulfide bridge links cysteine 101 with cysteine 179. Residues 104–124 (FNGTLSLGMFTSVFFLSAIGL) traverse the membrane as a helical segment. Over 125–143 (DRYLLTLHPVWSQQHRTPR) the chain is Cytoplasmic. The helical transmembrane segment at 144–165 (WASSIVLGVWISAAALSIPYLI) threads the bilayer. Residues 166-209 (FRETHHDRKGKVTCQNNYAVSTNWESKEMQASRQWIHVACFISR) are Extracellular-facing. Residues 210–230 (FLLGFLLPFFIIIFCYERVAS) traverse the membrane as a helical segment. The Cytoplasmic portion of the chain corresponds to 231-246 (KVKERSLFKSSKPFKV). Residues 247–268 (MMTAIISFFVCWMPYHIHQGLL) form a helical membrane-spanning segment. The Extracellular segment spans residues 269–283 (LTTNQSLLLELTLIL). Asparagine 272 carries an N-linked (GlcNAc...) asparagine glycan. A helical transmembrane segment spans residues 284 to 303 (TVLTTSFNTIFSPTLYLFVG). Residues 304–333 (ENFKKVFKKSILALFESTFSEDSSVERTQT) lie on the Cytoplasmic side of the membrane.

The protein belongs to the G-protein coupled receptor 1 family. In terms of tissue distribution, expressed in spleen, lung, heart, liver, kidney, pancreas, thymus, gonads and leukocytes.

The protein resides in the cell membrane. In terms of biological role, orphan receptor; could be a chemoattractant receptor. This chain is Probable G-protein coupled receptor 33 (GPR33), found in Homo sapiens (Human).